The chain runs to 276 residues: MHKIFSKNNLIFFVFVAFIFVVIVLQFFVSSENATKVNLSQTFEPISWLHLLGTDDYGRDLFTRIIIGARSTLFVTVLTLIAIVVIGVTLGLFAGYKKGWIERLVLRFIDVGLSIPEFIIMIALASFFQPSLWNLVISITLIKWMNYTRLTRSIVNSEMNKPYIKMAQLFHVPTRTILIRHLTPKIIPAIIVLMVVDFGKIILYISSLSFIGLGAQPPTPEWGAMLQQGRDFISSHPIMLIAPASVIAITILIFNLTGDALRDRLLKQRGEYDESH.

5 helical membrane-spanning segments follow: residues 10–30 (LIFF…FFVS), 73–93 (LFVT…LGLF), 108–128 (FIDV…ASFF), 186–206 (IIPA…LYIS), and 238–258 (IMLI…NLTG). Residues 69-258 (ARSTLFVTVL…ITILIFNLTG (190 aa)) form the ABC transmembrane type-1 domain.

The protein belongs to the binding-protein-dependent transport system permease family. OppBC subfamily. As to quaternary structure, the complex is composed of two ATP-binding proteins (NikD and NikE), two transmembrane proteins (NikB and NikC) and a solute-binding protein (NikA).

Its subcellular location is the cell membrane. Part of the ABC transporter complex NikABCDE (Opp2) involved in nickel import. Probably responsible for the translocation of the substrate across the membrane. The polypeptide is Nickel import system permease protein NikC (Staphylococcus aureus (strain USA300)).